The chain runs to 191 residues: Small ribosomal subunit protein uS7 (191 aa).

The tract at residues 56–80 (NKSGEQGDGDGEGGGKAGGIKKRSL) is disordered.

Belongs to the universal ribosomal protein uS7 family. In terms of assembly, part of the 30S ribosomal subunit. Contacts proteins S9 and S11.

In terms of biological role, one of the primary rRNA binding proteins, it binds directly to 16S rRNA where it nucleates assembly of the head domain of the 30S subunit. Is located at the subunit interface close to the decoding center, probably blocks exit of the E-site tRNA. This is Small ribosomal subunit protein uS7 from Coxiella burnetii (strain CbuG_Q212) (Coxiella burnetii (strain Q212)).